We begin with the raw amino-acid sequence, 646 residues long: Long-chain fatty acid transport protein 1 (646 aa).

Residues 1–13 (MRAPGAGTASVAS) lie on the Extracellular side of the membrane. A helical membrane pass occupies residues 14-34 (LALLWFLGLPWTWSAAAAFCV). At 35–646 (YVGGGGWRFL…ARICAGDFSL (612 aa)) the chain is on the cytoplasmic side. The segment at 191–475 (EVSEQLGKSL…YVSDSATNKK (285 aa)) is sufficient for oligomerization. Residue 246 to 257 (YIYTSGTTGLPK) coordinates AMP.

The protein belongs to the ATP-dependent AMP-binding enzyme family. In terms of assembly, self-associates. May function as a homodimer. Interacts with EPRS1; mediates the translocation of SLC27A1 from the cytoplasm to the plasma membrane thereby increasing the uptake of long-chain fatty acids. Interacts with DGAT2 and this interaction is enhanced in the presence of ZFYVE1. In terms of tissue distribution, higher expression in white adipose tissue than in heart. Highest expression in skeletal muscle, heart and fat. Lower levels in brain, kidney, lung, liver and testis. No expression in spleen or intestine.

It is found in the cell membrane. Its subcellular location is the mitochondrion outer membrane. The protein localises to the endomembrane system. It localises to the cytoplasm. It carries out the reaction a fatty acid(in) = a fatty acid(out). The enzyme catalyses (9Z)-octadecenoate(out) = (9Z)-octadecenoate(in). The catalysed reaction is hexadecanoate(out) = hexadecanoate(in). It catalyses the reaction (5Z,8Z,11Z,14Z)-eicosatetraenoate(out) = (5Z,8Z,11Z,14Z)-eicosatetraenoate(in). It carries out the reaction (9Z,12Z)-octadecadienoate(out) = (9Z,12Z)-octadecadienoate(in). The enzyme catalyses a long-chain fatty acid + ATP + CoA = a long-chain fatty acyl-CoA + AMP + diphosphate. The catalysed reaction is (5Z,8Z,11Z,14Z)-eicosatetraenoate + ATP + CoA = (5Z,8Z,11Z,14Z)-eicosatetraenoyl-CoA + AMP + diphosphate. It catalyses the reaction a very long-chain fatty acid + ATP + CoA = a very long-chain fatty acyl-CoA + AMP + diphosphate. It carries out the reaction tetracosanoate + ATP + CoA = tetracosanoyl-CoA + AMP + diphosphate. With respect to regulation, inhibited by Triacsin C. Both insulin and muscle contraction stimulate translocation to the plasma membrane in muscle, increasing fatty acid transport activity. Its function is as follows. Mediates the import of long-chain fatty acids (LCFA) into the cell by facilitating their transport at the plasma membrane. Also functions as an acyl-CoA ligase catalyzing the ATP-dependent formation of fatty acyl-CoA using LCFA and very-long-chain fatty acids (VLCFA) as substrates, which prevents fatty acid efflux from cells and might drive more fatty acid uptake. May act directly as a bona fide transporter, or alternatively, in a cytoplasmic or membrane-associated multimeric protein complex to trap and draw fatty acids towards accumulation. Plays a pivotal role in regulating available LCFA substrates from exogenous sources in tissues undergoing high levels of beta-oxidation or triglyceride synthesis. May be involved in regulation of cholesterol metabolism. Probably involved in fatty acid transport across the blood barrier. The protein is Long-chain fatty acid transport protein 1 of Mus musculus (Mouse).